Reading from the N-terminus, the 363-residue chain is Diheme-cytochrome-encapsulin shell fusion protein (363 aa).

Positions 1–36 (MVMGILNTFKKVYAVTGFFALLAVFSLSQVGSSAFA) are cleaved as a signal peptide. The interval 37–74 (ACAKVDDCFSCHTTQELNAVHKNTPYQGQSCIVCHKAF) is diheme c-type cytochrome. Heme contacts are provided by Cys44, Cys47, His48, Cys67, Cys70, and His71. Residues 75-94 (AADDTCSDAKDGRFAKISSE) are linker. An encapsulin domain region spans residues 95–363 (ININKEDWNK…KCPQAICTLE (269 aa)).

This sequence belongs to the encapsulin family. Family 1 subfamily. As to quaternary structure, the encapsulin nanocompartment is probably formed by 180 monomers, with the N-terminus (diheme domain) inside. There are 36 pores where the pentamers meet as well as 3-fold axis channels and dimer channels. The cofactor is heme.

The protein localises to the encapsulin nanocompartment. Functionally, fusion of the shell and cargo protein of a type 1 encapsulin nanocompartment. Protein missing its signal peptide makes 33 nm particles in E.coli (called cEnc), protein missing its signal peptide and diheme domain (residues 1-86, called Enc) makes 29 nm particles. The cEnc nancompartment encloses c-type heme. The cargo protein NIR-HAO (AC P0DV45) is probably targeted to the nanocompartment by its association with the diheme domain in cEnc; removal of the diheme domain in Enc halves the amount of cargo. In Kuenenia stuttgartiensis, this protein is Diheme-cytochrome-encapsulin shell fusion protein.